A 507-amino-acid polypeptide reads, in one-letter code: Histidine ammonia-lyase (507 aa).

A cross-link (5-imidazolinone (Ala-Gly)) is located at residues 141–143 (ASG). Position 142 is a 2,3-didehydroalanine (Ser) (Ser-142).

Belongs to the PAL/histidase family. Contains an active site 4-methylidene-imidazol-5-one (MIO), which is formed autocatalytically by cyclization and dehydration of residues Ala-Ser-Gly.

The protein resides in the cytoplasm. The enzyme catalyses L-histidine = trans-urocanate + NH4(+). The protein operates within amino-acid degradation; L-histidine degradation into L-glutamate; N-formimidoyl-L-glutamate from L-histidine: step 1/3. This Burkholderia cenocepacia (strain ATCC BAA-245 / DSM 16553 / LMG 16656 / NCTC 13227 / J2315 / CF5610) (Burkholderia cepacia (strain J2315)) protein is Histidine ammonia-lyase.